A 195-amino-acid polypeptide reads, in one-letter code: Peroxiredoxin (195 aa).

Residues 4–162 (AMIGKPAPEF…TLRLVQAFQF (159 aa)) enclose the Thioredoxin domain. The active-site Cysteine sulfenic acid (-SOH) intermediate is Cys49.

Belongs to the peroxiredoxin family. AhpC/Prx1 subfamily. As to quaternary structure, homodimer; disulfide-linked, upon oxidation.

It catalyses the reaction a hydroperoxide + [thioredoxin]-dithiol = an alcohol + [thioredoxin]-disulfide + H2O. Its function is as follows. Thiol-specific peroxidase that catalyzes the reduction of hydrogen peroxide and organic hydroperoxides to water and alcohols, respectively. Plays a role in cell protection against oxidative stress by detoxifying peroxides and as sensor of hydrogen peroxide-mediated signaling events. The sequence is that of Peroxiredoxin from Ascaris suum (Pig roundworm).